The sequence spans 200 residues: Glycerol-3-phosphate acyltransferase (200 aa).

Transmembrane regions (helical) follow at residues 4–24, 53–73, 80–100, 115–135, and 138–158; these read FALC…AVIV, WAAL…VWCG, QFEL…PIFF, IAPI…LVFV, and GYSS…VWWF.

It belongs to the PlsY family. As to quaternary structure, probably interacts with PlsX.

It localises to the cell inner membrane. It catalyses the reaction an acyl phosphate + sn-glycerol 3-phosphate = a 1-acyl-sn-glycero-3-phosphate + phosphate. It participates in lipid metabolism; phospholipid metabolism. In terms of biological role, catalyzes the transfer of an acyl group from acyl-phosphate (acyl-PO(4)) to glycerol-3-phosphate (G3P) to form lysophosphatidic acid (LPA). This enzyme utilizes acyl-phosphate as fatty acyl donor, but not acyl-CoA or acyl-ACP. This is Glycerol-3-phosphate acyltransferase from Actinobacillus succinogenes (strain ATCC 55618 / DSM 22257 / CCUG 43843 / 130Z).